Consider the following 507-residue polypeptide: ATP synthase subunit alpha (507 aa).

An ATP-binding site is contributed by 168–175; that stretch reads GDRKTGKT.

This sequence belongs to the ATPase alpha/beta chains family. In terms of assembly, F-type ATPases have 2 components, CF(1) - the catalytic core - and CF(0) - the membrane proton channel. CF(1) has five subunits: alpha(3), beta(3), gamma(1), delta(1), epsilon(1). CF(0) has three main subunits: a(1), b(2) and c(9-12). The alpha and beta chains form an alternating ring which encloses part of the gamma chain. CF(1) is attached to CF(0) by a central stalk formed by the gamma and epsilon chains, while a peripheral stalk is formed by the delta and b chains.

The protein localises to the cell inner membrane. It catalyses the reaction ATP + H2O + 4 H(+)(in) = ADP + phosphate + 5 H(+)(out). Functionally, produces ATP from ADP in the presence of a proton gradient across the membrane. The alpha chain is a regulatory subunit. The chain is ATP synthase subunit alpha from Ehrlichia ruminantium (strain Gardel).